We begin with the raw amino-acid sequence, 188 residues long: GTP cyclohydrolase 1 (188 aa).

The Zn(2+) site is built by C73, H76, and C144.

The protein belongs to the GTP cyclohydrolase I family. As to quaternary structure, homomer.

The enzyme catalyses GTP + H2O = 7,8-dihydroneopterin 3'-triphosphate + formate + H(+). The protein operates within cofactor biosynthesis; 7,8-dihydroneopterin triphosphate biosynthesis; 7,8-dihydroneopterin triphosphate from GTP: step 1/1. In Caldivirga maquilingensis (strain ATCC 700844 / DSM 13496 / JCM 10307 / IC-167), this protein is GTP cyclohydrolase 1.